Here is a 203-residue protein sequence, read N- to C-terminus: Large ribosomal subunit protein bL25 (203 aa).

Belongs to the bacterial ribosomal protein bL25 family. CTC subfamily. Part of the 50S ribosomal subunit; part of the 5S rRNA/L5/L18/L25 subcomplex. Contacts the 5S rRNA. Binds to the 5S rRNA independently of L5 and L18.

Functionally, this is one of the proteins that binds to the 5S RNA in the ribosome where it forms part of the central protuberance. This Rickettsia prowazekii (strain Madrid E) protein is Large ribosomal subunit protein bL25.